Reading from the N-terminus, the 625-residue chain is Chaperone protein HtpG (625 aa).

Residues M1 to R339 are a; substrate-binding. The interval E340–R557 is b. The segment at L558–V625 is c.

The protein belongs to the heat shock protein 90 family. As to quaternary structure, homodimer.

Its subcellular location is the cytoplasm. Its function is as follows. Molecular chaperone. Has ATPase activity. The sequence is that of Chaperone protein HtpG from Methylibium petroleiphilum (strain ATCC BAA-1232 / LMG 22953 / PM1).